The sequence spans 204 residues: Recombination protein RecR (204 aa).

The C4-type zinc finger occupies 58–75 (CTICQNITDVGTDPCAIC). The region spanning 83 to 181 (TVICVVESPV…AVTKIARGIP (99 aa)) is the Toprim domain.

This sequence belongs to the RecR family.

In terms of biological role, may play a role in DNA repair. It seems to be involved in an RecBC-independent recombinational process of DNA repair. It may act with RecF and RecO. This Chlorobium chlorochromatii (strain CaD3) protein is Recombination protein RecR.